Here is a 624-residue protein sequence, read N- to C-terminus: Chaperone protein DnaK (624 aa).

At threonine 174 the chain carries Phosphothreonine; by autocatalysis. 2 disordered regions span residues 544 to 563 and 576 to 624; these read KKAQ…DDLS and NAQK…DDKK. The segment covering 581–600 has biased composition (low complexity); the sequence is QQAQGGPASGAATDAGAAQG. The segment covering 601-624 has biased composition (basic and acidic residues); it reads SDDKKSDDDTINGDYKDVSDDDKK.

The protein belongs to the heat shock protein 70 family.

Acts as a chaperone. The polypeptide is Chaperone protein DnaK (Lacticaseibacillus casei (strain BL23) (Lactobacillus casei)).